The chain runs to 349 residues: Ribosomal RNA large subunit methyltransferase M (349 aa).

S-adenosyl-L-methionine-binding positions include Ser-183, 216–219 (APGG), Asp-235, Asp-255, and Asp-271. The active-site Proton acceptor is Lys-300.

It belongs to the class I-like SAM-binding methyltransferase superfamily. RNA methyltransferase RlmE family. RlmM subfamily. In terms of assembly, monomer.

It localises to the cytoplasm. The catalysed reaction is cytidine(2498) in 23S rRNA + S-adenosyl-L-methionine = 2'-O-methylcytidine(2498) in 23S rRNA + S-adenosyl-L-homocysteine + H(+). In terms of biological role, catalyzes the 2'-O-methylation at nucleotide C2498 in 23S rRNA. The chain is Ribosomal RNA large subunit methyltransferase M from Stutzerimonas stutzeri (strain A1501) (Pseudomonas stutzeri).